A 310-amino-acid polypeptide reads, in one-letter code: Formyltetrahydrofolate deformylase (310 aa).

A disordered region spans residues 1–30 (MGKGSMTAHATPNEPDYPPPPGGPPPPADI). Residues 15–28 (PDYPPPPGGPPPPA) show a composition bias toward pro residues. Residues 32–108 (RLLLRCHDRP…VADKFGIDYR (77 aa)) form the ACT domain. Asp-255 is an active-site residue.

This sequence belongs to the PurU family.

It carries out the reaction (6R)-10-formyltetrahydrofolate + H2O = (6S)-5,6,7,8-tetrahydrofolate + formate + H(+). It participates in purine metabolism; IMP biosynthesis via de novo pathway; formate from 10-formyl-5,6,7,8-tetrahydrofolate: step 1/1. Functionally, catalyzes the hydrolysis of 10-formyltetrahydrofolate (formyl-FH4) to formate and tetrahydrofolate (FH4). This Mycobacterium bovis (strain ATCC BAA-935 / AF2122/97) protein is Formyltetrahydrofolate deformylase.